We begin with the raw amino-acid sequence, 172 residues long: Ribosome maturation factor RimM (172 aa).

One can recognise a PRC barrel domain in the interval 96–168 (DGEFYYHEII…RVDVEIPEGL (73 aa)).

Belongs to the RimM family. Binds ribosomal protein uS19.

It is found in the cytoplasm. In terms of biological role, an accessory protein needed during the final step in the assembly of 30S ribosomal subunit, possibly for assembly of the head region. Essential for efficient processing of 16S rRNA. May be needed both before and after RbfA during the maturation of 16S rRNA. It has affinity for free ribosomal 30S subunits but not for 70S ribosomes. The polypeptide is Ribosome maturation factor RimM (Streptococcus sanguinis (strain SK36)).